The sequence spans 254 residues: MDLGYLYGLICSIYGAVEDWRKREVTDFLWISMLWVGVFIHLLYNKSLLLFFIEIFAVLFITLSVRYEKFNKLVYIGVFLFLLSFILFKSYFALSFLVFYLIGIFLYYLNFMGGGDCKFLMGLSYLKGMFFTFIIFLNAILFVIPYCIFILLINLKNGNHKRLKLKNLPLLFIALKKDIDKVKKFETIMGDDENLSLIPNINEEKEEKKTYKGKVWVTPQLPFLVFICLSYILYIVSPFPLIFKVIELVIKSHF.

5 helical membrane-spanning segments follow: residues 33–53 (MLWVGVFIHLLYNKSLLLFFI), 70–90 (FNKLVYIGVFLFLLSFILFKS), 92–112 (FALSFLVFYLIGIFLYYLNFM), 133–153 (FIIFLNAILFVIPYCIFILLI), and 223–243 (FLVFICLSYILYIVSPFPLIF).

To M.jannaschii MJ0902.

The protein localises to the cell membrane. This is an uncharacterized protein from Methanocaldococcus jannaschii (strain ATCC 43067 / DSM 2661 / JAL-1 / JCM 10045 / NBRC 100440) (Methanococcus jannaschii).